The following is a 297-amino-acid chain: Putative S-adenosyl-L-methionine-dependent methyltransferase Mmcs_1044 (297 aa).

Residues Asp-124 and 153–154 (DL) contribute to the S-adenosyl-L-methionine site.

It belongs to the UPF0677 family.

Its function is as follows. Exhibits S-adenosyl-L-methionine-dependent methyltransferase activity. This chain is Putative S-adenosyl-L-methionine-dependent methyltransferase Mmcs_1044, found in Mycobacterium sp. (strain MCS).